Consider the following 144-residue polypeptide: Maximins 1/H1 (144 aa).

A signal peptide spans 1–18; it reads MNFKYIVAVSFLLASAYA. A propeptide spanning residues 19–43 is cleaved from the precursor; it reads RSEENDEQSLSQRDVLEEESLREIR. Position 70 is an asparagine amide (Asn70). Residues 74–123 constitute a propeptide that is removed on maturation; the sequence is TAEEHEVMKRLEAVMRDLDSLDYPEEAAERETRSFNQEEIANLFTKKEKR. Leucine amide is present on Leu143.

Belongs to the bombinin family. As to expression, expressed by the skin glands.

The protein resides in the secreted. Antibacterial peptide with amphipathic alpha-helical structure that has activity against both Gram-positive and Gram-negative bacteria. Also shows antimicrobial activity against the fungus C.albicans, but not against A.flavus nor P.uticale. It has little hemolytic activity. It possess a significant cytotoxicity against tumor cell lines, but does not possess a significant anti-HIV activity. Also shows high spermicidal activity. Functionally, antibacterial peptide with activity against both Gram-positive and Gram-negative bacteria. Also shows antimicrobial activity against the fungus C.albicans. In addition, shows strong hemolytic activity. This is Maximins 1/H1 from Bombina maxima (Giant fire-bellied toad).